A 209-amino-acid chain; its full sequence is Lipopolysaccharide export system protein LptC (209 aa).

Residues 7 to 26 (NIRWNVILGVIALCALAWFY) traverse the membrane as a helical segment.

It belongs to the LptC family. In terms of assembly, component of the lipopolysaccharide transport and assembly complex. Interacts with LptA and the LptBFG transporter complex.

Its subcellular location is the cell inner membrane. Involved in the assembly of lipopolysaccharide (LPS). Required for the translocation of LPS from the inner membrane to the outer membrane. Facilitates the transfer of LPS from the inner membrane to the periplasmic protein LptA. Could be a docking site for LptA. This Haemophilus influenzae (strain ATCC 51907 / DSM 11121 / KW20 / Rd) protein is Lipopolysaccharide export system protein LptC.